The chain runs to 508 residues: Cytochrome P450 monooxygenase orf4 (508 aa).

Cys447 is a binding site for heme.

This sequence belongs to the cytochrome P450 family. The cofactor is heme.

It participates in mycotoxin biosynthesis. In terms of biological role, cytochrome P450 monooxygenase; part of the gene cluster that mediates the biosynthesis of brefeldin A (BFA), a protein transport inhibitor that shows antiviral, antifungal, and antitumor properties. The proposed biosynthesis of BFA involves formation of an acyclic polyketide chain that is differentially tailored throughout the backbone. The highly reducing polyketide synthase Bref-PKS is proposed to synthesize the precisely reduced octaketide precursor, which could then be directly offloaded by the thiohydrolase enzyme Bref-TH followed by a cytochrome P450 monooxygenase-mediated formation of the cyclopentane ring and macrocyclization to afford 7-deoxy BFA. Alternatively, the first ring annulation can also occur on the ACP-tethered intermediate before the thiohydrolase release and lactonization. The C7-hydroxylation by another cytochrome P450 monooxygenase is believed to be the final step in the process to obtain the final structure of BFA. In addition to the HRPKS Bref-PKS and the thiohydrolase Bref-TH, the brefeldin A biosynthesis cluster contains 4 cytochrome p450 monooxygenases (called orf3 to orf6), as well a the probable cluster-specific transcription regulator orf8. This chain is Cytochrome P450 monooxygenase orf4, found in Eupenicillium brefeldianum (Penicillium brefeldianum).